The sequence spans 113 residues: U11-theraphotoxin-Hhn1a (113 aa).

The first 21 residues, 1-21 (MNTVRVTFLLVFVLAVSLGQA), serve as a signal peptide directing secretion. A propeptide spanning residues 22–74 (DKDENRMEMQEKTEQGESYLDFAENLLLQKLEELEAKLLEEDSEESRNSRQKR) is cleaved from the precursor. Cystine bridges form between Cys75–Cys90, Cys82–Cys95, and Cys89–Cys110.

Belongs to the neurotoxin 14 (magi-1) family. 01 (HNTX-16) subfamily. As to expression, expressed by the venom gland.

The protein localises to the secreted. Its function is as follows. Probable ion channel inhibitor. This Cyriopagopus hainanus (Chinese bird spider) protein is U11-theraphotoxin-Hhn1a.